The primary structure comprises 857 residues: Putative serine/threonine-protein kinase receptor (857 aa).

Residues 1–32 form the signal peptide; sequence MKGARNIYHHSYMSFLLVFVVMILIHPALSIY. Residues 33–446 lie on the Extracellular side of the membrane; the sequence is INTLSSTESL…IAKKRNASGK (414 aa). In terms of domain architecture, Bulb-type lectin spans 35–155; the sequence is TLSSTESLTI…SNNDASEYLW (121 aa). N-linked (GlcNAc...) asparagine glycosylation is found at asparagine 47, asparagine 120, asparagine 196, asparagine 260, asparagine 389, and asparagine 442. The 84-residue stretch at 350 to 433 folds into the PAN domain; that stretch reads CSGDGFTRMK…DGQDLYVRLA (84 aa). Intrachain disulfides connect cysteine 380–cysteine 405 and cysteine 388–cysteine 390. The helical transmembrane segment at 447-466 threads the bilayer; it reads IISLTVGVSVLLLLIMFCLW. Residues 467 to 857 lie on the Cytoplasmic side of the membrane; the sequence is KRKQKRAKAS…QYTCSVIDAR (391 aa). Positions 528 to 779 constitute a Protein kinase domain; sequence FSSCNKLGQG…PSIFQPQEVL (252 aa). ATP contacts are provided by residues 534-542 and lysine 556; that span reads LGQGGFGIV. Aspartate 653 (proton acceptor) is an active-site residue.

Belongs to the protein kinase superfamily. Ser/Thr protein kinase family. In terms of tissue distribution, predominantly in the pistil and anther.

The protein localises to the membrane. It catalyses the reaction L-seryl-[protein] + ATP = O-phospho-L-seryl-[protein] + ADP + H(+). The catalysed reaction is L-threonyl-[protein] + ATP = O-phospho-L-threonyl-[protein] + ADP + H(+). Involved in sporophytic self-incompatibility system (the inability of flowering plants to achieve self-fertilization), probably acting in combination with S-locus-specific glycoproteins. Interaction with a ligand in the extracellular domain triggers the protein kinase activity of the cytoplasmic domain. The protein is Putative serine/threonine-protein kinase receptor (SRK6) of Brassica oleracea var. viridis (Flowering kale).